Reading from the N-terminus, the 98-residue chain is Parvalbumin beta 1 (98 aa).

Serine 1 carries the N-acetylserine modification. EF-hand domains follow at residues 32–67 (KIGLAGKKVFAIIDQDKSDFVEEDELKLFLQVFSAG) and 67–98 (GARALTDAETKAGDSDGDGKIGVDEFAQMIKG). 11 residues coordinate Ca(2+): aspartate 45, aspartate 47, serine 49, phenylalanine 51, glutamate 53, glutamate 56, aspartate 80, aspartate 82, aspartate 84, lysine 86, and glutamate 91.

It belongs to the parvalbumin family.

Its function is as follows. In muscle, parvalbumin is thought to be involved in relaxation after contraction. It binds two calcium ions. In Macruronus magellanicus (Patagonian grenadier), this protein is Parvalbumin beta 1.